Consider the following 187-residue polypeptide: Shikimate kinase (187 aa).

14–19 contacts ATP; it reads GSGKST. Ser-18 provides a ligand contact to Mg(2+). The substrate site is built by Asp-36, Arg-60, and Gly-82. Arg-120 lines the ATP pocket. Residue Arg-147 coordinates substrate.

Belongs to the shikimate kinase family. Monomer. The cofactor is Mg(2+).

Its subcellular location is the cytoplasm. The enzyme catalyses shikimate + ATP = 3-phosphoshikimate + ADP + H(+). It functions in the pathway metabolic intermediate biosynthesis; chorismate biosynthesis; chorismate from D-erythrose 4-phosphate and phosphoenolpyruvate: step 5/7. Functionally, catalyzes the specific phosphorylation of the 3-hydroxyl group of shikimic acid using ATP as a cosubstrate. The polypeptide is Shikimate kinase (Chlorobaculum parvum (strain DSM 263 / NCIMB 8327) (Chlorobium vibrioforme subsp. thiosulfatophilum)).